Here is a 39-residue protein sequence, read N- to C-terminus: Photosystem II reaction center protein J (39 aa).

The chain crosses the membrane as a helical span at residues 7–27; it reads IPLWLVGLVGGLAVITMLSLF.

It belongs to the PsbJ family. In terms of assembly, PSII is composed of 1 copy each of membrane proteins PsbA, PsbB, PsbC, PsbD, PsbE, PsbF, PsbH, PsbI, PsbJ, PsbK, PsbL, PsbM, PsbT, PsbX, PsbY, PsbZ, Psb30/Ycf12, at least 3 peripheral proteins of the oxygen-evolving complex and a large number of cofactors. It forms dimeric complexes.

The protein resides in the plastid. It localises to the chloroplast thylakoid membrane. One of the components of the core complex of photosystem II (PSII). PSII is a light-driven water:plastoquinone oxidoreductase that uses light energy to abstract electrons from H(2)O, generating O(2) and a proton gradient subsequently used for ATP formation. It consists of a core antenna complex that captures photons, and an electron transfer chain that converts photonic excitation into a charge separation. The protein is Photosystem II reaction center protein J of Trieres chinensis (Marine centric diatom).